The following is a 533-amino-acid chain: Na(+)/H(+) antiporter NhaB (533 aa).

A run of 11 helical transmembrane segments spans residues 10-30 (IGNFLGNSPKWYKIAILSFLI), 67-87 (PGGLLAIEAVAIGMTSASQVL), 96-116 (VLLLLVFMVAGIYFMKQLLLF), 131-165 (VSLLFCLASAFLSAFLDALTVIAVIITVAVGFYSI), 209-229 (LLMHAGVGTALGGVCTMVGEP), 247-267 (IRMSPVTVPVFIAGILTCYIV), 310-330 (AFIGVWLIAGLALHLASVGLI), 355-375 (EEALPFTALLAVFFSVVAVII), 396-416 (LVIFYIANGLLSMVSDNVFVG), 454-474 (ATPNGQAAFLFLLTSALAPLI), and 485-505 (ALPYTIVLSIVGVMAIQIGFL).

It belongs to the NhaB Na(+)/H(+) (TC 2.A.34) antiporter family.

Its subcellular location is the cell inner membrane. It catalyses the reaction 2 Na(+)(in) + 3 H(+)(out) = 2 Na(+)(out) + 3 H(+)(in). Its function is as follows. Na(+)/H(+) antiporter that extrudes sodium in exchange for external protons. This chain is Na(+)/H(+) antiporter NhaB, found in Shewanella oneidensis (strain ATCC 700550 / JCM 31522 / CIP 106686 / LMG 19005 / NCIMB 14063 / MR-1).